A 167-amino-acid polypeptide reads, in one-letter code: 3-isopropylmalate dehydratase small subunit (167 aa).

It belongs to the LeuD family. LeuD type 2 subfamily. Heterodimer of LeuC and LeuD.

The catalysed reaction is (2R,3S)-3-isopropylmalate = (2S)-2-isopropylmalate. The protein operates within amino-acid biosynthesis; L-leucine biosynthesis; L-leucine from 3-methyl-2-oxobutanoate: step 2/4. Its function is as follows. Catalyzes the isomerization between 2-isopropylmalate and 3-isopropylmalate, via the formation of 2-isopropylmaleate. The protein is 3-isopropylmalate dehydratase small subunit of Wolinella succinogenes (strain ATCC 29543 / DSM 1740 / CCUG 13145 / JCM 31913 / LMG 7466 / NCTC 11488 / FDC 602W) (Vibrio succinogenes).